A 360-amino-acid chain; its full sequence is Peptide chain release factor 1 (360 aa).

Gln237 carries the post-translational modification N5-methylglutamine.

Belongs to the prokaryotic/mitochondrial release factor family. Post-translationally, methylated by PrmC. Methylation increases the termination efficiency of RF1.

It is found in the cytoplasm. In terms of biological role, peptide chain release factor 1 directs the termination of translation in response to the peptide chain termination codons UAG and UAA. In Pseudomonas fluorescens (strain SBW25), this protein is Peptide chain release factor 1.